Consider the following 1705-residue polypeptide: Receptor-type tyrosine-protein phosphatase V (1705 aa).

The signal sequence occupies residues 1–18 (MRPLILLAALLWLQDSLA). Residues 19–1077 (QEDVCSSLDG…QASISLVAMP (1059 aa)) lie on the Extracellular side of the membrane. Residues 24–44 (SSLDGSPDRQGGGPPLSVSVT) form a disordered region. Fibronectin type-III domains lie at 37-129 (PPLS…TAPT), 130-222 (VVRG…VPPD), 218-305 (PVPP…EWTY), 306-388 (PSYP…SIWL), 393-454 (ARPM…HYRV), 475-569 (PPQS…APPT), 565-654 (PAPP…TGWT), 655-749 (PPSA…TPNE), 744-831 (PLTP…VLSV), and 832-926 (EPGP…SAEV). N74, N89, N117, N174, N239, N259, N299, N345, N431, N551, N570, N620, N649, N663, and N737 each carry an N-linked (GlcNAc...) asparagine glycan. N-linked (GlcNAc...) asparagine glycosylation is found at N851, N882, N970, and N982. A helical transmembrane segment spans residues 1078 to 1100 (LTVMMGTVVGCIIIVCAVLCLLC). The Cytoplasmic portion of the chain corresponds to 1101 to 1705 (RRGLKGPRSE…LRNRLPRARK (605 aa)). Tyrosine-protein phosphatase domains are found at residues 1150 to 1409 (FFQE…LLNK) and 1427 to 1695 (NFAQ…LNSA). Substrate is bound by residues D1316, 1350–1356 (CSAGVGR), and Q1394. C1350 functions as the Phosphocysteine intermediate in the catalytic mechanism.

This sequence belongs to the protein-tyrosine phosphatase family. Receptor class 3 subfamily.

It localises to the membrane. It catalyses the reaction O-phospho-L-tyrosyl-[protein] + H2O = L-tyrosyl-[protein] + phosphate. Its function is as follows. Protein tyrosine phosphatase that acts as a regulator of energy metabolism by mediating dephosphorylation of insulin receptor (Insr). Prevents decarboxylation of osteocalcin (Bglap and Bglap2) via an indirect mechanism: dephosphorylation of insulin receptor prevents insulin signaling-dependent decarboxylation of osteocalcin, preventing the hormone activity of osteocalcin. May play a role in the maintenance of pluripotency. In Mus musculus (Mouse), this protein is Receptor-type tyrosine-protein phosphatase V (Ptprv).